Here is a 212-residue protein sequence, read N- to C-terminus: Ras-related protein Rab-15 (212 aa).

S17, G18, V19, G20, K21, T22, C23, S35, S39, and T40 together coordinate GTP. T22 contributes to the Mg(2+) binding site. Short sequence motifs (switch) lie at residues 31-45 (NEFHSSHISTIGVDF) and 63-80 (DTAGQERYQTITKQYYRR). Positions 40 and 63 each coordinate Mg(2+). G66, N121, K122, D124, S151, and A152 together coordinate GTP. The disordered stretch occupies residues 192–212 (ELEEDEGKPEGPANSSKTCWC). S-geranylgeranyl cysteine attachment occurs at residues C210 and C212. A Cysteine methyl ester modification is found at C212.

It belongs to the small GTPase superfamily. Rab family. As to quaternary structure, the GTP bound form of RAB15 interacts with REP15. Interacts (GTP-bound form) with MICAL1, MICAL3, MICALCL, EHBP1 and EHBP1L1. It depends on Mg(2+) as a cofactor.

Its subcellular location is the cell membrane. The catalysed reaction is GTP + H2O = GDP + phosphate + H(+). Its activity is regulated as follows. Regulated by guanine nucleotide exchange factors (GEFs) which promote the exchange of bound GDP for free GTP. Regulated by GTPase activating proteins (GAPs) which increase the GTP hydrolysis activity. Inhibited by GDP dissociation inhibitors (GDIs). The small GTPases Rab are key regulators of intracellular membrane trafficking, from the formation of transport vesicles to their fusion with membranes. Rabs cycle between an inactive GDP-bound form and an active GTP-bound form that is able to recruit to membranes different sets of downstream effectors directly responsible for vesicle formation, movement, tethering and fusion. RAB15 may act in concert with RAB3A in regulating aspects of synaptic vesicle membrane flow within the nerve terminal. The chain is Ras-related protein Rab-15 from Mus musculus (Mouse).